The chain runs to 297 residues: Guanylate kinase (297 aa).

Residues 4–183 (GKMIIISGPS…AVAKITDVLH (180 aa)) enclose the Guanylate kinase-like domain. Residue 11–18 (GPSGVGKG) participates in ATP binding. Positions 204 to 297 (EQIVKEKYMY…EQKHYNNDEF (94 aa)) are unknown.

Belongs to the guanylate kinase family.

The protein localises to the cytoplasm. It catalyses the reaction GMP + ATP = GDP + ADP. Its function is as follows. Essential for recycling GMP and indirectly, cGMP. In Mycoplasma mycoides subsp. mycoides SC (strain CCUG 32753 / NCTC 10114 / PG1), this protein is Guanylate kinase (gmk).